The chain runs to 189 residues: Inner membrane-spanning protein YciB (189 aa).

Transmembrane regions (helical) follow at residues 23 to 43 (ILLA…FVWW), 54 to 74 (ITLA…DAAF), 82 to 102 (VNWL…KTLI), 120 to 140 (LNLA…YVFK), and 150 to 170 (FKLF…GVYL).

The protein belongs to the YciB family.

Its subcellular location is the cell inner membrane. Plays a role in cell envelope biogenesis, maintenance of cell envelope integrity and membrane homeostasis. The polypeptide is Inner membrane-spanning protein YciB (Chromohalobacter salexigens (strain ATCC BAA-138 / DSM 3043 / CIP 106854 / NCIMB 13768 / 1H11)).